Here is a 479-residue protein sequence, read N- to C-terminus: UDP-glycosyltransferase 84A3 (479 aa).

The active-site Proton acceptor is His19. His19 lines the an anthocyanidin pocket. UDP-alpha-D-glucose contacts are provided by Gln346, His361, Trp364, Asn365, Ser366, and Glu369. Gly384 lines the an anthocyanidin pocket. Positions 385 and 386 each coordinate UDP-alpha-D-glucose.

The protein belongs to the UDP-glycosyltransferase family.

It catalyses the reaction (E)-4-coumarate + UDP-alpha-D-glucose = 4-O-(beta-D-glucosyl)-trans-4-coumarate + UDP + H(+). It carries out the reaction (E)-ferulate + UDP-alpha-D-glucose = 1-O-[(E)-feruloyl]-beta-D-glucose + UDP. The enzyme catalyses (E)-caffeate + UDP-alpha-D-glucose = 1-O-[(E)-caffeoyl]-beta-D-glucose + UDP. The catalysed reaction is (E)-sinapate + UDP-alpha-D-glucose = 1-O-(trans-sinapoyl)-beta-D-glucose + UDP. It catalyses the reaction (E)-cinnamate + UDP-alpha-D-glucose = 1-O-(trans-cinnamoyl)-beta-D-glucose + UDP. Functionally, UDP-glucosyltransferase that forms glucose esters with phenylpropanoids. Glucosylates 4-coumarate, ferulate, caffeate, sinapate and cinnamate. This chain is UDP-glycosyltransferase 84A3, found in Arabidopsis thaliana (Mouse-ear cress).